The primary structure comprises 294 residues: Elongation factor Ts (294 aa).

Positions 80-83 (TDFV) are involved in Mg(2+) ion dislocation from EF-Tu.

The protein belongs to the EF-Ts family.

It is found in the cytoplasm. Functionally, associates with the EF-Tu.GDP complex and induces the exchange of GDP to GTP. It remains bound to the aminoacyl-tRNA.EF-Tu.GTP complex up to the GTP hydrolysis stage on the ribosome. The polypeptide is Elongation factor Ts (Listeria monocytogenes serovar 1/2a (strain ATCC BAA-679 / EGD-e)).